Consider the following 228-residue polypeptide: Ribonuclease 3 (228 aa).

The RNase III domain maps to Leu5–Gly127. Glu40 lines the Mg(2+) pocket. The active site involves Asp44. Residues Asp113 and Glu116 each coordinate Mg(2+). The active site involves Glu116. Positions Asp154–Ala224 constitute a DRBM domain.

Belongs to the ribonuclease III family. In terms of assembly, homodimer. Mg(2+) serves as cofactor.

The protein localises to the cytoplasm. It carries out the reaction Endonucleolytic cleavage to 5'-phosphomonoester.. Functionally, digests double-stranded RNA. Involved in the processing of primary rRNA transcript to yield the immediate precursors to the large and small rRNAs (23S and 16S). Processes some mRNAs, and tRNAs when they are encoded in the rRNA operon. Processes pre-crRNA and tracrRNA of type II CRISPR loci if present in the organism. This is Ribonuclease 3 from Variovorax paradoxus (strain S110).